Consider the following 811-residue polypeptide: Serine/threonine-protein kinase prpf4B (811 aa).

4 disordered regions span residues 1–257, 288–341, 353–379, and 408–452; these read MVIE…TNEP, EKYN…NQIE, KDQN…EDLK, and VSIK…TNGG. Residues 46–71 show a composition bias toward low complexity; sequence SSPASRETSSSKLMSPSKNQSSSSSR. Residues 81–202 show a composition bias toward basic and acidic residues; that stretch reads RRKDERYSSS…DNMDSRDNKN (122 aa). Polar residues predominate over residues 203-215; the sequence is GSRQSINNNTLSY. The span at 217–240 shows a compositional bias: basic and acidic residues; the sequence is KQADRKDEVRVKDNISVNDDKTNH. Polar residues-rich tracts occupy residues 241-257 and 293-302; these read GENL…TNEP and EQPQPITSSL. Over residues 310–327 the composition is skewed to low complexity; it reads SNTNTNSNSTPVATTTTS. The Protein kinase domain occupies 490 to 808; the sequence is YQIFSPIGSG…PFEALNHEFL (319 aa). Residues 496–504 and lysine 519 each bind ATP; that span reads IGSGVFSTV. Aspartate 619 functions as the Proton acceptor in the catalytic mechanism.

Belongs to the protein kinase superfamily. CMGC Ser/Thr protein kinase family. Post-translationally, phosphorylated. Autophosphorylated; phosphorylation inhibits interaction with its targets.

Its subcellular location is the nucleus. The protein resides in the chromosome. The protein localises to the centromere. It localises to the kinetochore. It catalyses the reaction L-seryl-[protein] + ATP = O-phospho-L-seryl-[protein] + ADP + H(+). The catalysed reaction is L-threonyl-[protein] + ATP = O-phospho-L-threonyl-[protein] + ADP + H(+). In terms of biological role, serine/threonine kinase involved in spliceosomal assembly as well as mitosis and signaling regulation. This Dictyostelium discoideum (Social amoeba) protein is Serine/threonine-protein kinase prpf4B (prp4k).